Reading from the N-terminus, the 122-residue chain is Small ribosomal subunit protein bS6 (122 aa).

A disordered region spans residues 97–122 (TAPSPMMKAVQKEDAAKSHRAEAPAA). Basic and acidic residues predominate over residues 106–122 (VQKEDAAKSHRAEAPAA).

The protein belongs to the bacterial ribosomal protein bS6 family.

Binds together with bS18 to 16S ribosomal RNA. The polypeptide is Small ribosomal subunit protein bS6 (Janthinobacterium sp. (strain Marseille) (Minibacterium massiliensis)).